A 155-amino-acid polypeptide reads, in one-letter code: uncharacterized protein (155 aa).

Residues 1–34 (MESLQTPQHRENQDKREKEYGVKHMPMGNNAGNL) form a disordered region. Positions 8–22 (QHRENQDKREKEYGV) are enriched in basic and acidic residues. The helical transmembrane segment at 115–135 (MSLLLLPAFSGLTWAPFLFLF) threads the bilayer.

The protein resides in the membrane. This is an uncharacterized protein from Homo sapiens (Human).